Reading from the N-terminus, the 157-residue chain is Small ribosomal subunit protein uS7 (157 aa).

It belongs to the universal ribosomal protein uS7 family. As to quaternary structure, part of the 30S ribosomal subunit. Contacts proteins S9 and S11.

In terms of biological role, one of the primary rRNA binding proteins, it binds directly to 16S rRNA where it nucleates assembly of the head domain of the 30S subunit. Is located at the subunit interface close to the decoding center, probably blocks exit of the E-site tRNA. This Koribacter versatilis (strain Ellin345) protein is Small ribosomal subunit protein uS7.